The following is a 358-amino-acid chain: Trace amine-associated receptor 7b (358 aa).

Residues 1–47 (MATDNDSFPWDQDSILSSDMFSATSTELCYENLNRSCVRSPYSPGPR) lie on the Extracellular side of the membrane. Residues asparagine 5 and asparagine 34 are each glycosylated (N-linked (GlcNAc...) asparagine). Cystine bridges form between cysteine 37/cysteine 201 and cysteine 120/cysteine 205. The helical transmembrane segment at 48–68 (LILYAVFGFGAALAVCGNLLV) threads the bilayer. Over 69-83 (MTSILHFRQLHSPAN) the chain is Cytoplasmic. Residues 84 to 104 (FLVVSLACADFLVGLTVMPFS) form a helical membrane-spanning segment. Over 105–121 (TVRSVEGCWYFGESYCK) the chain is Extracellular. Residues 122 to 143 (LHTCFDVSFCYCSIFHLCFISV) traverse the membrane as a helical segment. Topologically, residues 144–166 (DRYIAVSDPLTYPTRFTAFVSGK) are cytoplasmic. The helical transmembrane segment at 167-187 (CITFSWLLSTIYGFSLLYTGA) threads the bilayer. Residues 188–212 (NEAGLEDLVSALTCVGGCQLAVNQS) lie on the Extracellular side of the membrane. Residue asparagine 210 is glycosylated (N-linked (GlcNAc...) asparagine). The chain crosses the membrane as a helical span at residues 213 to 233 (WVFINFLLFLIPTLVMITVYS). Over 234–274 (KIFLIAKQQAQNIEKMSKQTARASDSYKDRVAKRERKAAKT) the chain is Cytoplasmic. Residues 275–295 (LGIAVAAFLLSWLPYFIDSII) form a helical membrane-spanning segment. Over 296 to 309 (DAFLGFITPTYVYE) the chain is Extracellular. A helical transmembrane segment spans residues 310 to 333 (ILVWIAYYNSAMNPLIYAFFYPWF). Residues 334 to 358 (RKAIKLIVSGKVLRENSSTTNLFPE) lie on the Cytoplasmic side of the membrane.

The protein belongs to the G-protein coupled receptor 1 family. In terms of tissue distribution, specifically expressed in neurons of the olfactory epithelium.

The protein localises to the cell membrane. Olfactory receptor specific for N,N-dimethylalkylamines trace amines, such as N,N-dimethylcyclohexylamine. Trace amine compounds are enriched in animal body fluids and act on trace amine-associated receptors (TAARs) to elicit both intraspecific and interspecific innate behaviors. Ligand-binding causes a conformation change that triggers signaling via G(s)-class of G alpha proteins (GNAL or GNAS). This is Trace amine-associated receptor 7b from Mus musculus (Mouse).